Here is a 302-residue protein sequence, read N- to C-terminus: Aspartate carbamoyltransferase catalytic subunit (302 aa).

The carbamoyl phosphate site is built by Arg53 and Thr54. Lys82 contributes to the L-aspartate binding site. Positions 103, 131, and 134 each coordinate carbamoyl phosphate. L-aspartate is bound by residues Arg164 and Arg223. Carbamoyl phosphate is bound by residues Leu260 and Pro261.

The protein belongs to the aspartate/ornithine carbamoyltransferase superfamily. ATCase family. In terms of assembly, heterooligomer of catalytic and regulatory chains.

The catalysed reaction is carbamoyl phosphate + L-aspartate = N-carbamoyl-L-aspartate + phosphate + H(+). It functions in the pathway pyrimidine metabolism; UMP biosynthesis via de novo pathway; (S)-dihydroorotate from bicarbonate: step 2/3. Functionally, catalyzes the condensation of carbamoyl phosphate and aspartate to form carbamoyl aspartate and inorganic phosphate, the committed step in the de novo pyrimidine nucleotide biosynthesis pathway. In Methanococcus vannielii (strain ATCC 35089 / DSM 1224 / JCM 13029 / OCM 148 / SB), this protein is Aspartate carbamoyltransferase catalytic subunit.